The chain runs to 855 residues: Endochitinase 2 (855 aa).

A signal peptide spans 1–22 (MGPTNILAAFIAVSSLFIQSLA). Positions 29 to 340 (SNLAVYWGQG…DIMKEVLLRC (312 aa)) constitute a GH18 domain. Residue asparagine 90 is glycosylated (N-linked (GlcNAc...) asparagine). Glutamate 175 serves as the catalytic Proton donor. The tract at residues 341–672 (DPDPPTSTVT…APSSSTTEDR (332 aa)) is disordered. Residues 346-400 (TSTVTSTTSASTSTQTSSQSTTMETKTLSASTTPSSPSTVSPSSTMQTTSTGSTS) show a composition bias toward low complexity. Residues 401–456 (IETVTTRSQEPPSTTISTRSASTEPVTTRSQEPPSTTISTRSASTETVTTRSQEPP) show a composition bias toward polar residues. Positions 457-483 (STTISTWSASTETSTSSQDSPSTTIST) are enriched in low complexity. The segment covering 484 to 521 (KSAPTGTVTTRSQDLPSTTISTRSPETETETATTKSQG) has biased composition (polar residues). Residues 522–533 (SPSITLSTRSSS) show a composition bias toward low complexity. A compositionally biased stretch (polar residues) spans 534–555 (AETVSTRSQHSSSTTISTKSAP). Over residues 556–567 (TETGTTSEHSTS) the composition is skewed to low complexity. Residues 568 to 641 (MPVSTRSAST…SQTPTTIITG (74 aa)) show a composition bias toward polar residues. Low complexity-rich tracts occupy residues 642–652 (TPSDPVSAPTT) and 659–672 (TLTL…TEDR). Glycine 826 is lipidated: GPI-anchor amidated glycine. Residues 827 to 855 (SAMTVRSMDVVAKALITAGAAVLGLFLGL) constitute a propeptide, removed in mature form.

The protein belongs to the glycosyl hydrolase 18 family. Chitinase class III subfamily.

It is found in the cell membrane. It catalyses the reaction Random endo-hydrolysis of N-acetyl-beta-D-glucosaminide (1-&gt;4)-beta-linkages in chitin and chitodextrins.. May be associated with endosporulation. The chain is Endochitinase 2 (CTS2) from Coccidioides posadasii (strain C735) (Valley fever fungus).